We begin with the raw amino-acid sequence, 326 residues long: Vitamin B12 import system permease protein BtuC (326 aa).

Topologically, residues 1 to 10 (MLTLARQQQR) are cytoplasmic. The chain crosses the membrane as a helical span at residues 11 to 35 (QNIRWLLCLSVLMLLALLLSLCAGE). Topologically, residues 36-56 (QWILPGDWFSPRGELFVWQIR) are periplasmic. A helical membrane pass occupies residues 57–81 (LPRTLAVLLVGAALAISGAVMQALF). The Cytoplasmic segment spans residues 82-92 (ENPLAEPGLLG). Residues 93 to 107 (VSNGAGVGLIAAVLL) form a helical membrane-spanning segment. Residues 108–113 (GQGQLP) lie on the Periplasmic side of the membrane. Residues 114-138 (NWALGLCAIAGALIITLILLRFARR) traverse the membrane as a helical segment. The Cytoplasmic portion of the chain corresponds to 139–141 (HLS). Residues 142 to 166 (TSRLLLAGVALGIICSALMTWAIYF) traverse the membrane as a helical segment. Residues 167-190 (STSVDLRQLMYWMMGGFGGVDWRQ) are Periplasmic-facing. Residues 191-206 (SWLMVALIPVLLWICC) traverse the membrane as a helical segment. The Cytoplasmic segment spans residues 207–228 (QSRPMNMLALGEISARQLGLPL). The helical transmembrane segment at 229–249 (WFWRNVLVAATGWMVGVSVAL) threads the bilayer. The Periplasmic portion of the chain corresponds to 250 to 257 (AGAIGFIG). A helical membrane pass occupies residues 258 to 267 (LVIPHILRLC). At 268 to 274 (GLTDHRV) the chain is on the cytoplasmic side. The chain crosses the membrane as a helical span at residues 275 to 296 (LLPGCALAGASALLLADIVARL). Over 297 to 304 (ALAAAELP) the chain is Periplasmic. Residues 305–324 (IGVVTATLGAPVFIWLLLKA) traverse the membrane as a helical segment. Topologically, residues 325–326 (GR) are cytoplasmic.

It belongs to the binding-protein-dependent transport system permease family. FecCD subfamily. As to quaternary structure, the complex is composed of two ATP-binding proteins (BtuD), two transmembrane proteins (BtuC) and a solute-binding protein (BtuF).

Its subcellular location is the cell inner membrane. Part of the ABC transporter complex BtuCDF involved in vitamin B12 import. Involved in the translocation of the substrate across the membrane. This chain is Vitamin B12 import system permease protein BtuC (btuC), found in Escherichia coli O6:H1 (strain CFT073 / ATCC 700928 / UPEC).